A 260-amino-acid chain; its full sequence is 5'-nucleotidase SurE (260 aa).

A divalent metal cation is bound by residues Asp8, Asp9, Ser39, and Asn93.

Belongs to the SurE nucleotidase family. It depends on a divalent metal cation as a cofactor.

The protein localises to the cytoplasm. It carries out the reaction a ribonucleoside 5'-phosphate + H2O = a ribonucleoside + phosphate. In terms of biological role, nucleotidase that shows phosphatase activity on nucleoside 5'-monophosphates. The polypeptide is 5'-nucleotidase SurE (Thermofilum pendens (strain DSM 2475 / Hrk 5)).